We begin with the raw amino-acid sequence, 155 residues long: 6,7-dimethyl-8-ribityllumazine synthase (155 aa).

5-amino-6-(D-ribitylamino)uracil contacts are provided by residues Phe24, 58–60 (AFE), and 82–84 (AII). 87–88 (ST) provides a ligand contact to (2S)-2-hydroxy-3-oxobutyl phosphate. His90 (proton donor) is an active-site residue. Residue Phe115 coordinates 5-amino-6-(D-ribitylamino)uracil. Residue Arg129 coordinates (2S)-2-hydroxy-3-oxobutyl phosphate.

This sequence belongs to the DMRL synthase family.

It catalyses the reaction (2S)-2-hydroxy-3-oxobutyl phosphate + 5-amino-6-(D-ribitylamino)uracil = 6,7-dimethyl-8-(1-D-ribityl)lumazine + phosphate + 2 H2O + H(+). It functions in the pathway cofactor biosynthesis; riboflavin biosynthesis; riboflavin from 2-hydroxy-3-oxobutyl phosphate and 5-amino-6-(D-ribitylamino)uracil: step 1/2. Functionally, catalyzes the formation of 6,7-dimethyl-8-ribityllumazine by condensation of 5-amino-6-(D-ribitylamino)uracil with 3,4-dihydroxy-2-butanone 4-phosphate. This is the penultimate step in the biosynthesis of riboflavin. The sequence is that of 6,7-dimethyl-8-ribityllumazine synthase from Chlorobium phaeovibrioides (strain DSM 265 / 1930) (Prosthecochloris vibrioformis (strain DSM 265)).